A 473-amino-acid chain; its full sequence is Photosystem II CP43 reaction center protein (473 aa).

A propeptide spanning residues 1–14 is cleaved from the precursor; sequence MKTLYSLRRFYHVE. Thr-15 bears the N-acetylthreonine mark. Phosphothreonine is present on Thr-15. A run of 5 helical transmembrane segments spans residues 69–93, 134–155, 178–200, 255–275, and 291–312; these read LFEVAHFVPEKPMYEQGLILLPHLA, LLGPETLEESFPFFGYVWKDRN, KASYFGGIYDTWAPGGGDVRKIT, KPFAWARRALVWSGEAYLSYS, and WFNNTAYPSEFYGPTGPEASQA. Residue Glu-367 coordinates [CaMn4O5] cluster. The chain crosses the membrane as a helical span at residues 447 to 471; sequence RARAAAAGFEKGIDRDFEPVLSMTP.

Belongs to the PsbB/PsbC family. PsbC subfamily. In terms of assembly, PSII is composed of 1 copy each of membrane proteins PsbA, PsbB, PsbC, PsbD, PsbE, PsbF, PsbH, PsbI, PsbJ, PsbK, PsbL, PsbM, PsbT, PsbX, PsbY, PsbZ, Psb30/Ycf12, at least 3 peripheral proteins of the oxygen-evolving complex and a large number of cofactors. It forms dimeric complexes. Binds multiple chlorophylls and provides some of the ligands for the Ca-4Mn-5O cluster of the oxygen-evolving complex. It may also provide a ligand for a Cl- that is required for oxygen evolution. PSII binds additional chlorophylls, carotenoids and specific lipids. serves as cofactor.

The protein localises to the plastid. Its subcellular location is the chloroplast thylakoid membrane. Functionally, one of the components of the core complex of photosystem II (PSII). It binds chlorophyll and helps catalyze the primary light-induced photochemical processes of PSII. PSII is a light-driven water:plastoquinone oxidoreductase, using light energy to abstract electrons from H(2)O, generating O(2) and a proton gradient subsequently used for ATP formation. In Cicer arietinum (Chickpea), this protein is Photosystem II CP43 reaction center protein.